We begin with the raw amino-acid sequence, 150 residues long: D-aminoacyl-tRNA deacylase (150 aa).

The short motif at 138–139 is the Gly-cisPro motif, important for rejection of L-amino acids element; that stretch reads GP.

It belongs to the DTD family. Homodimer.

Its subcellular location is the cytoplasm. It carries out the reaction glycyl-tRNA(Ala) + H2O = tRNA(Ala) + glycine + H(+). The enzyme catalyses a D-aminoacyl-tRNA + H2O = a tRNA + a D-alpha-amino acid + H(+). Its function is as follows. An aminoacyl-tRNA editing enzyme that deacylates mischarged D-aminoacyl-tRNAs. Also deacylates mischarged glycyl-tRNA(Ala), protecting cells against glycine mischarging by AlaRS. Acts via tRNA-based rather than protein-based catalysis; rejects L-amino acids rather than detecting D-amino acids in the active site. By recycling D-aminoacyl-tRNA to D-amino acids and free tRNA molecules, this enzyme counteracts the toxicity associated with the formation of D-aminoacyl-tRNA entities in vivo and helps enforce protein L-homochirality. This Bacteroides thetaiotaomicron (strain ATCC 29148 / DSM 2079 / JCM 5827 / CCUG 10774 / NCTC 10582 / VPI-5482 / E50) protein is D-aminoacyl-tRNA deacylase.